The sequence spans 277 residues: Phosphonates import ATP-binding protein PhnC 2 (277 aa).

Residues 5–253 enclose the ABC transporter domain; the sequence is IHVQGLNKTF…FLNDLYGADA (249 aa). Residue 37–44 coordinates ATP; sequence GASGSGKS.

Belongs to the ABC transporter superfamily. Phosphonates importer (TC 3.A.1.9.1) family. As to quaternary structure, the complex is composed of two ATP-binding proteins (PhnC), two transmembrane proteins (PhnE) and a solute-binding protein (PhnD).

It is found in the cell inner membrane. It catalyses the reaction phosphonate(out) + ATP + H2O = phosphonate(in) + ADP + phosphate + H(+). Part of the ABC transporter complex PhnCDE involved in phosphonates import. Responsible for energy coupling to the transport system. In Pseudomonas syringae pv. syringae (strain B728a), this protein is Phosphonates import ATP-binding protein PhnC 2.